A 221-amino-acid polypeptide reads, in one-letter code: Oligoribonuclease (221 aa).

The 166-residue stretch at 21–186 (LVWVDLEMTG…ADIVESIREL (166 aa)) folds into the Exonuclease domain. Tyrosine 143 is an active-site residue.

It belongs to the oligoribonuclease family.

Its subcellular location is the cytoplasm. In terms of biological role, 3'-to-5' exoribonuclease specific for small oligoribonucleotides. The protein is Oligoribonuclease of Corynebacterium efficiens (strain DSM 44549 / YS-314 / AJ 12310 / JCM 11189 / NBRC 100395).